The chain runs to 602 residues: Elongation factor 4 (602 aa).

Residues 7 to 189 enclose the tr-type G domain; sequence RNIRNFSIIA…AIVQRIPAPQ (183 aa). GTP is bound by residues 19–24 and 136–139; these read DHGKST and NKID.

Belongs to the TRAFAC class translation factor GTPase superfamily. Classic translation factor GTPase family. LepA subfamily.

Its subcellular location is the cell inner membrane. The catalysed reaction is GTP + H2O = GDP + phosphate + H(+). Required for accurate and efficient protein synthesis under certain stress conditions. May act as a fidelity factor of the translation reaction, by catalyzing a one-codon backward translocation of tRNAs on improperly translocated ribosomes. Back-translocation proceeds from a post-translocation (POST) complex to a pre-translocation (PRE) complex, thus giving elongation factor G a second chance to translocate the tRNAs correctly. Binds to ribosomes in a GTP-dependent manner. The protein is Elongation factor 4 of Xylella fastidiosa (strain 9a5c).